The primary structure comprises 643 residues: Lysophospholipase ARB_05919 (643 aa).

An N-terminal signal peptide occupies residues 1-22 (MMFIPATLGTFVLASLLPATVG). Residues 50-597 (DCPSTKPAVR…KMYCWDGTLN (548 aa)) form the PLA2c domain. Residues Asn-142, Asn-176, Asn-195, Asn-293, Asn-466, Asn-472, Asn-482, Asn-503, Asn-524, Asn-533, Asn-552, and Asn-597 are each glycosylated (N-linked (GlcNAc...) asparagine).

Belongs to the lysophospholipase family.

The protein localises to the secreted. It catalyses the reaction a 1-acyl-sn-glycero-3-phosphocholine + H2O = sn-glycerol 3-phosphocholine + a fatty acid + H(+). Catalyzes the release of fatty acids from lysophospholipids. Phospholipase B may well contribute to pathogenicity by abetting the fungus in damaging host cell membranes. This chain is Lysophospholipase ARB_05919, found in Arthroderma benhamiae (strain ATCC MYA-4681 / CBS 112371) (Trichophyton mentagrophytes).